Consider the following 703-residue polypeptide: DnaJ homolog subfamily C member 14 (703 aa).

Over residues 1–11 (MAQKHPGERRL) the composition is skewed to basic and acidic residues. The segment at 1 to 229 (MAQKHPGERR…GRHRLARKRS (229 aa)) is disordered. The segment covering 17–28 (SGGTSLSTSGSS) has biased composition (low complexity). Over residues 75–84 (HGPPRGPGPP) the composition is skewed to pro residues. Residues 91-102 (DESETGSEESGV) show a composition bias toward acidic residues. The segment covering 121–133 (SFLSIPSACNCQG) has biased composition (polar residues). Residues 163–176 (GEDEELEEEYDDEE) show a composition bias toward acidic residues. A compositionally biased stretch (basic residues) spans 193–202 (PLSRRQKHRF). The span at 203–218 (LIKEDVRDSGRREPKA) shows a compositional bias: basic and acidic residues. Basic residues predominate over residues 219-228 (PGRHRLARKR). The next 2 helical transmembrane spans lie at 305-325 (MMFQ…IRIL) and 327-347 (VVGA…QLGW). The J domain occupies 444–508 (NPFHVLGVEA…ERRKEYEMKR (65 aa)). 2 disordered regions span residues 622-643 (FGSR…PPAD) and 659-703 (MSNG…PFQR). Polar residues predominate over residues 673 to 684 (GTTSTSRPNSSV). Over residues 691–703 (PKRRKKVRRPFQR) the composition is skewed to basic residues.

As to quaternary structure, interacts with the FxxxFxxxF motif of DRD1 via its C-terminal domain.

The protein resides in the endoplasmic reticulum membrane. Its function is as follows. Regulates the export of target proteins, such as DRD1, from the endoplasmic reticulum to the cell surface. The sequence is that of DnaJ homolog subfamily C member 14 (Dnajc14) from Mus musculus (Mouse).